We begin with the raw amino-acid sequence, 499 residues long: Argininosuccinate lyase (499 aa).

Positions 1–22 (MSDGEDHETANADDRDETVVRR) are disordered. The segment covering 7 to 22 (HETANADDRDETVVRR) has biased composition (basic and acidic residues).

Belongs to the lyase 1 family. Argininosuccinate lyase subfamily.

It is found in the cytoplasm. It carries out the reaction 2-(N(omega)-L-arginino)succinate = fumarate + L-arginine. It participates in amino-acid biosynthesis; L-arginine biosynthesis; L-arginine from L-ornithine and carbamoyl phosphate: step 3/3. The polypeptide is Argininosuccinate lyase (Haloarcula marismortui (strain ATCC 43049 / DSM 3752 / JCM 8966 / VKM B-1809) (Halobacterium marismortui)).